A 1203-amino-acid polypeptide reads, in one-letter code: DNA-directed RNA polymerase subunit beta' (1203 aa).

The Zn(2+) site is built by C60, C62, C75, and C78. Residues D449, D451, and D453 each contribute to the Mg(2+) site. C818, C892, C899, and C902 together coordinate Zn(2+).

This sequence belongs to the RNA polymerase beta' chain family. As to quaternary structure, the RNAP catalytic core consists of 2 alpha, 1 beta, 1 beta' and 1 omega subunit. When a sigma factor is associated with the core the holoenzyme is formed, which can initiate transcription. Mg(2+) is required as a cofactor. The cofactor is Zn(2+).

The enzyme catalyses RNA(n) + a ribonucleoside 5'-triphosphate = RNA(n+1) + diphosphate. In terms of biological role, DNA-dependent RNA polymerase catalyzes the transcription of DNA into RNA using the four ribonucleoside triphosphates as substrates. This Bacillus cereus (strain ZK / E33L) protein is DNA-directed RNA polymerase subunit beta'.